A 153-amino-acid chain; its full sequence is UPF0260 protein YcgN (153 aa).

Belongs to the UPF0260 family.

This chain is UPF0260 protein YcgN, found in Escherichia coli O6:K15:H31 (strain 536 / UPEC).